We begin with the raw amino-acid sequence, 217 residues long: MFVRAAPRLLKSPVMRRMLSGKMDKAEEPPSFKTILLVGLVGTAIFVKAVDSLEQNKPKNTYTFSEFDTVMSGLRRRVSIFEQDDLNLRCVQTGVATKKLKFPEDAKVIKPSEAIEFFRNKSDDKYYVLLNDLYEKEGKSYMEKLPTGLSVVLIGKYMKEKCQKGDTVYLLDFPDNIKDAIKFENEVSVIDKVIVPNSEGDGQVSKYFKTVDKVETI.

The N-terminal 26 residues, 1 to 26, are a transit peptide targeting the mitochondrion; the sequence is MFVRAAPRLLKSPVMRRMLSGKMDKA. A helical transmembrane segment spans residues 34–50; sequence TILLVGLVGTAIFVKAV.

This sequence belongs to the AIM36 family.

The protein localises to the mitochondrion membrane. In Kluyveromyces lactis (strain ATCC 8585 / CBS 2359 / DSM 70799 / NBRC 1267 / NRRL Y-1140 / WM37) (Yeast), this protein is Altered inheritance of mitochondria protein 36, mitochondrial (AIM36).